The following is a 60-amino-acid chain: Ferredoxin-1 (60 aa).

4Fe-4S ferredoxin-type domains follow at residues 2-27 (LYIT…SAGD) and 28-60 (DIYV…IVQG). Residues cysteine 8, cysteine 11, cysteine 14, cysteine 18, cysteine 37, cysteine 40, cysteine 48, and cysteine 52 each contribute to the [4Fe-4S] cluster site.

It depends on [4Fe-4S] cluster as a cofactor.

In terms of biological role, ferredoxins are iron-sulfur proteins that transfer electrons in a wide variety of metabolic reactions. The sequence is that of Ferredoxin-1 from Chlorobium limicola.